A 170-amino-acid chain; its full sequence is Phosphopantetheine adenylyltransferase (170 aa).

Thr10 is a binding site for substrate. Residues 10-11 (TF) and His18 each bind ATP. Lys42, Val79, and Arg93 together coordinate substrate. Residues 94-96 (GLR), Glu104, and 129-135 (TQFISST) contribute to the ATP site.

It belongs to the bacterial CoaD family. Homohexamer. Mg(2+) is required as a cofactor.

Its subcellular location is the cytoplasm. The enzyme catalyses (R)-4'-phosphopantetheine + ATP + H(+) = 3'-dephospho-CoA + diphosphate. It participates in cofactor biosynthesis; coenzyme A biosynthesis; CoA from (R)-pantothenate: step 4/5. Reversibly transfers an adenylyl group from ATP to 4'-phosphopantetheine, yielding dephospho-CoA (dPCoA) and pyrophosphate. In Parvibaculum lavamentivorans (strain DS-1 / DSM 13023 / NCIMB 13966), this protein is Phosphopantetheine adenylyltransferase.